The chain runs to 718 residues: ATP-dependent RNA helicase homolog DQX1 (718 aa).

The Helicase ATP-binding domain occupies 54 to 222; that stretch reads HLESSPTGVV…WGNSPIVRVP (169 aa). 67–74 contacts ATP; that stretch reads GDPGSGKS. A DEAQ box motif is present at residues 167-170; the sequence is DEAQ. Residues 245 to 447 form the Helicase C-terminal domain; sequence ACQAVLELCQ…ALMRALEDLD (203 aa). Positions 690 to 718 are disordered; that stretch reads QLREGTAEPPAAATETSSPQEYGDGCVLQ. Positions 696–708 are enriched in low complexity; it reads AEPPAAATETSSP.

As to expression, ubiquitous.

It localises to the nucleus. Its function is as follows. Might be involved in RNA metabolism; it is missing helicase motif III and may not have helicase activity. The polypeptide is ATP-dependent RNA helicase homolog DQX1 (Dqx1) (Mus musculus (Mouse)).